The chain runs to 367 residues: Germination protease (367 aa).

Residues 1 to 15 (MKEPLDLSKYSIRTD) constitute a propeptide that is removed on maturation.

Belongs to the peptidase A25 family. As to quaternary structure, homotetramer. Post-translationally, autoproteolytically processed. The inactive tetrameric zymogen termed p46 autoprocesses to a smaller form termed p41, which is active only during spore germination.

The enzyme catalyses Endopeptidase action with P4 Glu or Asp, P1 preferably Glu &gt; Asp, P1' hydrophobic and P2' Ala.. Functionally, initiates the rapid degradation of small, acid-soluble proteins during spore germination. The chain is Germination protease from Bacillus cereus (strain B4264).